The sequence spans 152 residues: Ninjurin-1 (152 aa).

The residue at position 1 (Met1) is an N-acetylmethionine. Positions 1 to 10 (MESGTEEYEL) are enriched in acidic residues. The segment at 1–29 (MESGTEEYELNGDLRPGSPGSPDALPPRW) is disordered. Topologically, residues 1–78 (MESGTEEYEL…EQGNDFAFFV (78 aa)) are extracellular. Ser18 and Ser21 each carry phosphoserine. An N-terminal adhesion motif region spans residues 26–37 (PPRWGLRNRPIN). The tract at residues 40 to 69 (HYANKKSAAESMLDIALLMANASQLKAVVE) is required to induce plasma membrane rupture. The segment at 44–55 (KKSAAESMLDIA) is helix alpha1. Positions 58-74 (MANASQLKAVVEQGNDF) are helix alpha2. Asn60 carries N-linked (GlcNAc...) asparagine glycosylation. A helical transmembrane segment spans residues 79–103 (PLVVLISISLVLQIGVGVLLIFLVK). Over 104-113 (YDLNNPAKHA) the chain is Cytoplasmic. The chain crosses the membrane as a helical span at residues 114–138 (KLDFLNNLATGLVFIIVVVNIFITA). The Extracellular portion of the chain corresponds to 139–152 (FGVQKPVMDVAPRQ).

The protein belongs to the ninjurin family. As to quaternary structure, homodimer; in absence of death stimuli, forms an inactive homodimer. Homooligomer; in response to death stimuli, homooligomerizes into long, highly branched filaments and large, ring-shaped structures in the membrane. In terms of processing, cleaved by MMP9 protease to generate the Secreted ninjurin-1 form. Post-translationally, N-linked glycosylation is required for homooligomerization.

It localises to the cell membrane. Its subcellular location is the synaptic cell membrane. The protein resides in the secreted. In response to death stimuli, homooligomerizes and disrupts membrane integrity by introducing the hydrophilic faces of alpha1 and alpha2 helices into the hydrophobic membrane. Homooligomerization and ability to mediate plasma membrane rupture is inhibited by glycine; it is unclear whether glycine directly or indirectly inhibits homooligomerization. In normal conditions, NINJ1 is autoinhibited via formation of a homodimer: in the inactive homodimer, the alpha1 and alpha2 helices (residues 44-74) form a single transmembrane region without a kink, in which hydrophilic faces of alpha1 and alpha2 helices are sequestered. Effector of various programmed cell death, such as pyroptosis and necroptosis, which mediates plasma membrane rupture (cytolysis). Oligomerizes in response to death stimuli and forms ring-like structures on the plasma membrane: acts by cutting and shedding membrane disks, like a cookie cutter, leading to membrane damage and loss that cannot be repaired by the cell. Plasma membrane rupture leads to release intracellular molecules named damage-associated molecular patterns (DAMPs) that propagate the inflammatory response. Mechanistically, mediates plasma membrane rupture by introducing hydrophilic faces of 2 alpha helices into the hydrophobic membrane. Induces plasma membrane rupture downstream of Gasdermin (GSDMA, GSDMB, GSDMC, GSDMD, or GSDME) or MLKL during pyroptosis or necroptosis, respectively. Acts as an effector of PANoptosis downstream of CASP1, CASP4, CASP8 and RIPK3. Also induces plasma membrane rupture in response to cell swelling caused by osmotic stress and ferroptosis downstream of lipid peroxidation. Acts as a regulator of Toll-like receptor 4 (TLR4) signaling triggered by lipopolysaccharide (LPS) during systemic inflammation; directly binds LPS. Involved in leukocyte migration during inflammation by promoting transendothelial migration of macrophages via homotypic binding. Promotes the migration of monocytes across the brain endothelium to central nervous system inflammatory lesions. Also acts as a homophilic transmembrane adhesion molecule involved in various processes such as axonal growth, cell chemotaxis and angiogenesis. Promotes cell adhesion by mediating homophilic interactions via its extracellular N-terminal adhesion motif (N-NAM). Involved in the progression of the inflammatory stress by promoting cell-to-cell interactions between immune cells and endothelial cells. Plays a role in nerve regeneration by promoting maturation of Schwann cells. Acts as a regulator of angiogenesis. Promotes the formation of new vessels by mediating the interaction between capillary pericyte cells and endothelial cells. Also mediates vascular functions in penile tissue as well as vascular formation. Promotes osteoclasts development by enhancing the survival of prefusion osteoclasts. Also involved in striated muscle growth and differentiation. Also involved in cell senescence in a p53/TP53 manner, possibly by acting as an indirect regulator of p53/TP53 mRNA translation. In terms of biological role, secreted form generated by cleavage, which has chemotactic activity. Acts as an anti-inflammatory mediator by promoting monocyte recruitment, thereby ameliorating atherosclerosis. The protein is Ninjurin-1 of Mus musculus (Mouse).